Reading from the N-terminus, the 535-residue chain is Putative cysteine ligase BshC (535 aa).

Positions 420 to 477 (DTFKALKESINSAYKNLQEKLAPLGADFQKLTGENLGRVMAQVKYLEERAQKYHREKN) form a coiled coil.

This sequence belongs to the BshC family.

In terms of biological role, involved in bacillithiol (BSH) biosynthesis. May catalyze the last step of the pathway, the addition of cysteine to glucosamine malate (GlcN-Mal) to generate BSH. In Carboxydothermus hydrogenoformans (strain ATCC BAA-161 / DSM 6008 / Z-2901), this protein is Putative cysteine ligase BshC.